The sequence spans 192 residues: Aminodeoxychorismate synthase component 2 (192 aa).

One can recognise a Glutamine amidotransferase type-1 domain in the interval 3–192; sequence SVLMIDNCDS…LANLIHRPCH (190 aa). Residues C83, H170, and E172 contribute to the active site.

Monomer. Heterodimer consisting of two non-identical subunits: a glutamine amidotransferase subunit (PabA) and a aminodeoxychorismate synthase subunit (PabB).

The enzyme catalyses chorismate + L-glutamine = 4-amino-4-deoxychorismate + L-glutamate. The protein operates within cofactor biosynthesis; tetrahydrofolate biosynthesis; 4-aminobenzoate from chorismate: step 1/2. Functionally, part of a heterodimeric complex that catalyzes the two-step biosynthesis of 4-amino-4-deoxychorismate (ADC), a precursor of p-aminobenzoate (PABA) and tetrahydrofolate. In the first step, a glutamine amidotransferase (PabA) generates ammonia as a substrate that, along with chorismate, is used in the second step, catalyzed by aminodeoxychorismate synthase (PabB) to produce ADC. PabA converts glutamine into glutamate only in the presence of stoichiometric amounts of PabB. This chain is Aminodeoxychorismate synthase component 2, found in Streptomyces lividans.